Consider the following 241-residue polypeptide: Phycocyanobilin:ferredoxin oxidoreductase (241 aa).

This sequence belongs to the HY2 family.

It carries out the reaction (2R,3Z)-phycocyanobilin + 4 oxidized [2Fe-2S]-[ferredoxin] = biliverdin IXalpha + 4 reduced [2Fe-2S]-[ferredoxin] + 4 H(+). Catalyzes the four-electron reduction of biliverdin IX-alpha (2-electron reduction at both the A and D rings); the reaction proceeds via an isolatable 2-electron intermediate, 181,182-dihydrobiliverdin. The polypeptide is Phycocyanobilin:ferredoxin oxidoreductase (Prochlorococcus marinus (strain MIT 9515)).